We begin with the raw amino-acid sequence, 1207 residues long: Brassinosteroid LRR receptor kinase (1207 aa).

A signal peptide spans 1-34 (MKAHKTVFNQHPLSLNKLFFVLLLIFFLPPASPA). The short motif at 71-78 (CSFTGVSC) is the Cys pair 1 element. 20 LRR repeats span residues 109–131 (NLES…AKSQ), 135–157 (TLDS…SSFG), 161–181 (NLKS…EMLK), 186–207 (SLQV…PWVS), 213–234 (ELEF…LDFK), 235–257 (NLSY…KDCS), 258–280 (NLQH…LSSC), 282–304 (KLSF…PSES), 305–325 (LQYL…QLAD), 329–350 (TVVE…SLGE), 353–374 (SLEL…DTLS), 378–400 (NIKT…FSNL), 402–423 (KLET…GICK), 428–450 (NLKV…LSNC), 452–474 (QLVS…LGSL), 476–499 (KLKD…MYLQ), 500–523 (ALEN…SNCT), 524–547 (KLNW…GRLS), 548–570 (NLAI…LGNC), and 572–594 (SLIW…LFKQ). N119 carries N-linked (GlcNAc...) asparagine glycosylation. 2 N-linked (GlcNAc...) asparagine glycosylation sites follow: N166 and N196. N-linked (GlcNAc...) asparagine glycans are attached at residues N235 and N245. N287 carries an N-linked (GlcNAc...) asparagine glycan. 2 N-linked (GlcNAc...) asparagine glycosylation sites follow: N339 and N363. N-linked (GlcNAc...) asparagine glycans are attached at residues N412 and N449. A glycan (N-linked (GlcNAc...) asparagine) is linked at N521. N556, N584, N646, and N662 each carry an N-linked (GlcNAc...) asparagine glycan. LRR repeat units follow at residues 664–686 (SMIF…LGAM), 688–711 (YLSI…GGLK), 712–735 (NVAI…TSLT), and 736–758 (LLGE…APFD). N-linked (GlcNAc...) asparagine glycosylation is found at N724, N746, and N767. The Cys pair 2 motif lies at 771–779 (CGYPLPIPC). The chain crosses the membrane as a helical span at residues 803–823 (SVAMGLLFSLFCIFGLIIVAI). The 276-residue stretch at 888–1163 (FHNDSLVGSG…IQVMAMFKEI (276 aa)) folds into the Protein kinase domain. ATP is bound by residues 894-902 (VGSGGFGDV) and K916. D1014 (proton acceptor) is an active-site residue.

Belongs to the protein kinase superfamily. Ser/Thr protein kinase family.

The protein localises to the cell membrane. It carries out the reaction L-seryl-[protein] + ATP = O-phospho-L-seryl-[protein] + ADP + H(+). It catalyses the reaction L-threonyl-[protein] + ATP = O-phospho-L-threonyl-[protein] + ADP + H(+). Functionally, receptor with a serine/threonine-protein kinase activity. Regulates, in response to brassinosteroid binding, a signaling cascade involved in plant development, including expression of light- and stress-regulated genes, promotion of cell elongation, normal leaf and chloroplast senescence, and flowering. May be involved in a feedback regulation of brassinosteroid biosynthesis. May be also involved in the perception of systemin, a peptide hormone responsible for the systemic activation of defense genes in leaves of wounded plants. This chain is Brassinosteroid LRR receptor kinase (CURL3), found in Solanum lycopersicum (Tomato).